A 251-amino-acid polypeptide reads, in one-letter code: tRNA pseudouridine synthase A (251 aa).

Asp-54 (nucleophile) is an active-site residue. Tyr-111 lines the substrate pocket.

It belongs to the tRNA pseudouridine synthase TruA family. Homodimer.

The enzyme catalyses uridine(38/39/40) in tRNA = pseudouridine(38/39/40) in tRNA. Its function is as follows. Formation of pseudouridine at positions 38, 39 and 40 in the anticodon stem and loop of transfer RNAs. The sequence is that of tRNA pseudouridine synthase A from Mycoplasma mycoides subsp. mycoides SC (strain CCUG 32753 / NCTC 10114 / PG1).